Reading from the N-terminus, the 440-residue chain is Cell division protein FtsA (440 aa).

Belongs to the FtsA/MreB family. Self-interacts. Interacts with FtsZ.

Its subcellular location is the cell membrane. Cell division protein that is involved in the assembly of the Z ring. May serve as a membrane anchor for the Z ring. This is Cell division protein FtsA from Enterococcus faecalis (strain ATCC 700802 / V583).